The sequence spans 166 residues: Endoribonuclease YbeY (166 aa).

Residues His-129, His-133, and His-139 each coordinate Zn(2+).

This sequence belongs to the endoribonuclease YbeY family. Zn(2+) serves as cofactor.

The protein resides in the cytoplasm. Its function is as follows. Single strand-specific metallo-endoribonuclease involved in late-stage 70S ribosome quality control and in maturation of the 3' terminus of the 16S rRNA. This chain is Endoribonuclease YbeY, found in Heliobacterium modesticaldum (strain ATCC 51547 / Ice1).